The chain runs to 1294 residues: uncharacterized protein (1294 aa).

Residues M1–Y375 are Extracellular-facing. Positions L28–Q287 constitute an ABC transporter 1 domain. N41 carries N-linked (GlcNAc...) asparagine glycosylation. Residue G62–T69 participates in ATP binding. 6 N-linked (GlcNAc...) asparagine glycosylation sites follow: N86, N101, N151, N341, N349, and N371. The helical transmembrane segment at V376–Y396 threads the bilayer. Topologically, residues Y397–Q495 are cytoplasmic. The chain crosses the membrane as a helical span at residues F496–V516. Over S517–T530 the chain is Extracellular. Residue N528 is glycosylated (N-linked (GlcNAc...) asparagine). Residues F531–V551 form a helical membrane-spanning segment. The Cytoplasmic segment spans residues R552–P604. The chain crosses the membrane as a helical span at residues A605–L625. Topologically, residues H626–L1038 are extracellular. Residues I679 to S941 enclose the ABC transporter 2 domain. G727 to S734 contacts ATP. N983 carries an N-linked (GlcNAc...) asparagine glycan. Residues M1039 to V1059 form a helical membrane-spanning segment. At K1060–E1120 the chain is on the cytoplasmic side. The helical transmembrane segment at L1121 to L1141 threads the bilayer. The Extracellular portion of the chain corresponds to P1142–Y1266. The helical transmembrane segment at L1267–A1287 threads the bilayer. Residues K1288 to W1294 are Cytoplasmic-facing.

It belongs to the ABC transporter superfamily. ABCG family. PDR (TC 3.A.1.205) subfamily.

The protein resides in the membrane. This is an uncharacterized protein from Saccharomyces cerevisiae (strain ATCC 204508 / S288c) (Baker's yeast).